The sequence spans 473 residues: Fumarate hydratase class II (473 aa).

Substrate contacts are provided by residues 105 to 107 (SGT), 130 to 133 (HPND), 140 to 142 (SSN), and threonine 188. The active-site Proton donor/acceptor is the histidine 189. Residue serine 319 is part of the active site. Substrate contacts are provided by residues serine 320 and 325 to 327 (KVN).

This sequence belongs to the class-II fumarase/aspartase family. Fumarase subfamily. Homotetramer.

The protein localises to the cytoplasm. The catalysed reaction is (S)-malate = fumarate + H2O. It functions in the pathway carbohydrate metabolism; tricarboxylic acid cycle; (S)-malate from fumarate: step 1/1. Involved in the TCA cycle. Catalyzes the stereospecific interconversion of fumarate to L-malate. The sequence is that of Fumarate hydratase class II from Xylella fastidiosa (strain 9a5c).